The sequence spans 456 residues: Potassium voltage-gated channel subfamily A member 7 (456 aa).

The chain crosses the membrane as a helical span at residues 144 to 164; the sequence is VLAVVSVLVILVSIVVFCLET. The N-linked (GlcNAc...) asparagine glycan is linked to N191. Residues 209 to 229 form a helical membrane-spanning segment; the sequence is FFVVETLCICWFSFELLVRLL. C231 carries S-palmitoyl cysteine lipidation. A helical membrane pass occupies residues 241 to 261; sequence VMNLIDFVAILPYFVALGTEL. A helical; Voltage-sensor transmembrane segment spans residues 276–295; that stretch reads ILRVIRLVRVFRIFKLSRHS. A helical transmembrane segment spans residues 312 to 332; that stretch reads LGLLIFFLFIGVVLFSSAVYF. The Selectivity filter signature appears at 358 to 363; sequence TVGYGD. A helical membrane pass occupies residues 373–393; that stretch reads IVGSLCAIAGVLTISLPVPVI.

It belongs to the potassium channel family. A (Shaker) (TC 1.A.1.2) subfamily. Kv1.7/KCNA7 sub-subfamily. As to quaternary structure, heterotetramer of potassium channel proteins. In terms of tissue distribution, highly expressed in skeletal muscle, heart and kidney.

The protein localises to the membrane. It carries out the reaction K(+)(in) = K(+)(out). In terms of biological role, mediates the voltage-dependent potassium ion permeability of excitable membranes. Assuming opened or closed conformations in response to the voltage difference across the membrane, the protein forms a potassium-selective channel through which potassium ions may pass in accordance with their electrochemical gradient. The polypeptide is Potassium voltage-gated channel subfamily A member 7 (KCNA7) (Homo sapiens (Human)).